The following is a 334-amino-acid chain: Holliday junction branch migration complex subunit RuvB (334 aa).

A large ATPase domain (RuvB-L) region spans residues alanine 4 to tyrosine 184. Residues isoleucine 23, arginine 24, glycine 65, lysine 68, threonine 69, threonine 70, glutamate 131–tyrosine 133, arginine 174, tyrosine 184, and arginine 221 contribute to the ATP site. Mg(2+) is bound at residue threonine 69. Residues glutamine 185 to asparagine 255 are small ATPAse domain (RuvB-S). Positions alanine 258 to glutamate 334 are head domain (RuvB-H). Residues arginine 294, arginine 313, and arginine 318 each contribute to the DNA site.

It belongs to the RuvB family. As to quaternary structure, homohexamer. Forms an RuvA(8)-RuvB(12)-Holliday junction (HJ) complex. HJ DNA is sandwiched between 2 RuvA tetramers; dsDNA enters through RuvA and exits via RuvB. An RuvB hexamer assembles on each DNA strand where it exits the tetramer. Each RuvB hexamer is contacted by two RuvA subunits (via domain III) on 2 adjacent RuvB subunits; this complex drives branch migration. In the full resolvosome a probable DNA-RuvA(4)-RuvB(12)-RuvC(2) complex forms which resolves the HJ.

It is found in the cytoplasm. It catalyses the reaction ATP + H2O = ADP + phosphate + H(+). In terms of biological role, the RuvA-RuvB-RuvC complex processes Holliday junction (HJ) DNA during genetic recombination and DNA repair, while the RuvA-RuvB complex plays an important role in the rescue of blocked DNA replication forks via replication fork reversal (RFR). RuvA specifically binds to HJ cruciform DNA, conferring on it an open structure. The RuvB hexamer acts as an ATP-dependent pump, pulling dsDNA into and through the RuvAB complex. RuvB forms 2 homohexamers on either side of HJ DNA bound by 1 or 2 RuvA tetramers; 4 subunits per hexamer contact DNA at a time. Coordinated motions by a converter formed by DNA-disengaged RuvB subunits stimulates ATP hydrolysis and nucleotide exchange. Immobilization of the converter enables RuvB to convert the ATP-contained energy into a lever motion, pulling 2 nucleotides of DNA out of the RuvA tetramer per ATP hydrolyzed, thus driving DNA branch migration. The RuvB motors rotate together with the DNA substrate, which together with the progressing nucleotide cycle form the mechanistic basis for DNA recombination by continuous HJ branch migration. Branch migration allows RuvC to scan DNA until it finds its consensus sequence, where it cleaves and resolves cruciform DNA. The sequence is that of Holliday junction branch migration complex subunit RuvB from Yersinia pseudotuberculosis serotype O:1b (strain IP 31758).